Here is a 212-residue protein sequence, read N- to C-terminus: Imidazole glycerol phosphate synthase subunit HisH (212 aa).

One can recognise a Glutamine amidotransferase type-1 domain in the interval 3–212 (DVAIIDYGMG…MLANFISWAP (210 aa)). The Nucleophile role is filled by cysteine 82. Residues histidine 192 and glutamate 194 contribute to the active site.

Heterodimer of HisH and HisF.

The protein localises to the cytoplasm. It catalyses the reaction 5-[(5-phospho-1-deoxy-D-ribulos-1-ylimino)methylamino]-1-(5-phospho-beta-D-ribosyl)imidazole-4-carboxamide + L-glutamine = D-erythro-1-(imidazol-4-yl)glycerol 3-phosphate + 5-amino-1-(5-phospho-beta-D-ribosyl)imidazole-4-carboxamide + L-glutamate + H(+). It carries out the reaction L-glutamine + H2O = L-glutamate + NH4(+). Its pathway is amino-acid biosynthesis; L-histidine biosynthesis; L-histidine from 5-phospho-alpha-D-ribose 1-diphosphate: step 5/9. In terms of biological role, IGPS catalyzes the conversion of PRFAR and glutamine to IGP, AICAR and glutamate. The HisH subunit catalyzes the hydrolysis of glutamine to glutamate and ammonia as part of the synthesis of IGP and AICAR. The resulting ammonia molecule is channeled to the active site of HisF. This Aromatoleum aromaticum (strain DSM 19018 / LMG 30748 / EbN1) (Azoarcus sp. (strain EbN1)) protein is Imidazole glycerol phosphate synthase subunit HisH.